We begin with the raw amino-acid sequence, 157 residues long: Cyclic pyranopterin monophosphate synthase (157 aa).

Substrate contacts are provided by residues 74–76 (MCH) and 111–112 (ME). Residue Asp126 is part of the active site.

The protein belongs to the MoaC family. In terms of assembly, homohexamer; trimer of dimers.

It carries out the reaction (8S)-3',8-cyclo-7,8-dihydroguanosine 5'-triphosphate = cyclic pyranopterin phosphate + diphosphate. The protein operates within cofactor biosynthesis; molybdopterin biosynthesis. Functionally, catalyzes the conversion of (8S)-3',8-cyclo-7,8-dihydroguanosine 5'-triphosphate to cyclic pyranopterin monophosphate (cPMP). The protein is Cyclic pyranopterin monophosphate synthase of Carboxydothermus hydrogenoformans (strain ATCC BAA-161 / DSM 6008 / Z-2901).